The following is a 297-amino-acid chain: L-ribulose 3-epimerase (297 aa).

Glutamate 147 functions as the Proton donor/acceptor in the catalytic mechanism. Residue glutamate 147 coordinates Mn(2+). Residues glutamate 153 and 180–183 (DTFH) contribute to the substrate site. Aspartate 180 and histidine 206 together coordinate Mn(2+). Residue arginine 212 participates in substrate binding. The Proton donor/acceptor role is filled by glutamate 241. Glutamate 241 is a binding site for Mn(2+).

The protein belongs to the hyi family. As to quaternary structure, homotetramer. Mn(2+) is required as a cofactor.

The catalysed reaction is L-ribulose = L-xylulose. It catalyses the reaction keto-D-tagatose = keto-D-sorbose. The enzyme catalyses D-allulose = keto-D-fructose. With respect to regulation, strongly inhibited by Co(2+) and Ni(2+), and slightly inhibited by EDTA. Its function is as follows. Catalyzes the epimerization of various ketoses at the C(3) position. It is able to interconvert L-ribulose with high efficiency. The enzyme can also accept other ketopentoses such as D-psicose and D-tagatose with lower efficiency. This is L-ribulose 3-epimerase from Mesorhizobium japonicum (strain LMG 29417 / CECT 9101 / MAFF 303099) (Mesorhizobium loti (strain MAFF 303099)).